A 473-amino-acid chain; its full sequence is MSGQGPPSNLTPQQQHMIMQQQQQQQMMRQQQIQQQQLHQRQLQQQQAQQSYQRSRTPQMQQHPGGGSPGSHLQMHPHLQSQGHMQPRSPLVGQHHPAPGSIPPGNPATPQMMQQQMGMNQPMSLPAPHVSRPGSVAPPASVPPNMHTGPSSNQMDQMGGQSQYSHHLQPQQPLSRPGSQQSHIAGGHGGPHSVQQPGSVLAPGSIQQPGSLLAPGSMHQPGSVQQPGSLGAPLSHTGAGGPQSVQGYGPGSVQPPGSAQAPSSVQPGSTFAPGSLQAPASQQPPASIQPPPSAASGSVAGPASAAPAKVEPLKPNEEQIRMVQDPVDLVRNLVQKDLRMSVVEMNKRGAELLHQKEEGAIKEEDRQQYKRATNDFHAVCDEIDRTLTTIMETAKQITKLDKVFQDRTSKEIDGEAMVNSVQKFVDETGIVQKMFDDTVNSVTSTMEKMRRRQKKWKDQQQQQENAEDAEMAE.

Residues 1 to 12 (MSGQGPPSNLTP) show a composition bias toward polar residues. 2 disordered regions span residues 1–319 (MSGQ…NEEQ) and 444–473 (STME…EMAE). Positions 13 to 50 (QQQHMIMQQQQQQQMMRQQQIQQQQLHQRQLQQQQAQQ) are enriched in low complexity. A compositionally biased stretch (polar residues) spans 51-62 (SYQRSRTPQMQQ). Low complexity-rich tracts occupy residues 111 to 123 (QMMQ…NQPM) and 130 to 139 (VSRPGSVAPP). Composition is skewed to polar residues over residues 148–183 (TGPS…QQSH) and 255–269 (PPGS…QPGS). 2 stretches are compositionally biased toward low complexity: residues 272-286 (APGS…QPPA) and 294-308 (AASG…AAPA).

Belongs to the Mediator complex subunit 29 family. In terms of assembly, component of the Mediator complex.

The protein resides in the nucleus. Component of the Mediator complex, a coactivator involved in the regulated transcription of nearly all RNA polymerase II-dependent genes. Mediator functions as a bridge to convey information from gene-specific regulatory proteins to the basal RNA polymerase II transcription machinery. Mediator is recruited to promoters by direct interactions with regulatory proteins and serves as a scaffold for the assembly of a functional preinitiation complex with RNA polymerase II and the general transcription factors. In Caenorhabditis briggsae, this protein is Mediator of RNA polymerase II transcription subunit 29 (mdt-29).